The following is an 80-amino-acid chain: Cell division activator CedA (80 aa).

The protein belongs to the CedA family.

In terms of biological role, activates the cell division inhibited by chromosomal DNA over-replication. The sequence is that of Cell division activator CedA from Salmonella arizonae (strain ATCC BAA-731 / CDC346-86 / RSK2980).